We begin with the raw amino-acid sequence, 1647 residues long: Transcription elongation factor SPT6 homolog (1647 aa).

A disordered region spans residues 1-209 (MARNAISDDE…SKKKKYRQGS (209 aa)). The segment covering 7 to 20 (SDDEEDHELEDDDG) has biased composition (acidic residues). Basic and acidic residues predominate over residues 21-30 (EPVHGDPAEH). Over residues 31-67 (DENDDEEDDDDVGNEYENDGFIVNDEDEEEEEEEDEE) the composition is skewed to acidic residues. The span at 103-114 (KFKKRQYKRLKK) shows a compositional bias: basic residues. The segment covering 132–151 (DSRGGTRRSAEDKIKDRLFD) has biased composition (basic and acidic residues). Positions 152-191 (DVDVDDPPDDVGDEEDLVVEEDVVGSEDEMADFIVDEDDE) are enriched in acidic residues. Residues 1103 to 1174 (GRIVQASVRR…QRYQVFLICK (72 aa)) form the S1 motif domain. The tract at residues 1429 to 1647 (PMRSPADHGS…RKSDGGGGGW (219 aa)) is disordered. Repeat copies occupy residues 1443-1444 (GW) and 1452-1453 (GW). The tract at residues 1443 to 1647 (GWGSSQSEGG…RKSDGGGGGW (205 aa)) is 12 X 2 AA repeats of [WG]-[GW] repeats. Gly residues predominate over residues 1462 to 1471 (SGRGGEYRNG). Over residues 1496–1507 (RRDDMNSDRQDG) the composition is skewed to basic and acidic residues. A run of 6 repeats spans residues 1511–1512 (WG), 1522–1523 (GW), 1530–1531 (GW), 1547–1548 (GW), 1563–1564 (WG), and 1574–1575 (GW). Composition is skewed to gly residues over residues 1519-1532 (ADGG…GGWG), 1539-1552 (KTGG…GSES), 1561-1579 (GSWG…GNDS), and 1588-1600 (GGFG…GGSD). A run of 4 repeats spans residues 1601–1602 (WG), 1615–1616 (GW), 1630–1631 (GW), and 1646–1647 (GW).

This sequence belongs to the SPT6 family. Interacts (via N-terminus) with IWS1. As to expression, expressed in shoot apical meristem, leaf primordia, vasculature of young leaves, inflorescence meristem, floral meristem, young floral organs, developing ovules and anthers.

Its subcellular location is the nucleus. Transcription elongation factor that enhances the transcription elongation by RNA polymerase II (RNAPII). Plays an important role in regulating embryo apical and basal patterning during early embryogenesis, partly through negative regulation of the transcription factors PHABULOSA and PHAVOLUTA. The polypeptide is Transcription elongation factor SPT6 homolog (Arabidopsis thaliana (Mouse-ear cress)).